The chain runs to 320 residues: o-succinylbenzoate synthase (320 aa).

Catalysis depends on Lys-133, which acts as the Proton donor. Mg(2+)-binding residues include Asp-161, Glu-190, and Asp-213. Lys-235 acts as the Proton acceptor in catalysis.

This sequence belongs to the mandelate racemase/muconate lactonizing enzyme family. MenC type 1 subfamily. Requires a divalent metal cation as cofactor.

It catalyses the reaction (1R,6R)-6-hydroxy-2-succinyl-cyclohexa-2,4-diene-1-carboxylate = 2-succinylbenzoate + H2O. It participates in quinol/quinone metabolism; 1,4-dihydroxy-2-naphthoate biosynthesis; 1,4-dihydroxy-2-naphthoate from chorismate: step 4/7. It functions in the pathway quinol/quinone metabolism; menaquinone biosynthesis. Functionally, converts 2-succinyl-6-hydroxy-2,4-cyclohexadiene-1-carboxylate (SHCHC) to 2-succinylbenzoate (OSB). This chain is o-succinylbenzoate synthase, found in Salmonella paratyphi C (strain RKS4594).